The chain runs to 308 residues: Glutaminase (308 aa).

7 residues coordinate substrate: S66, N117, E161, N168, Y192, Y244, and V262.

This sequence belongs to the glutaminase family. Homotetramer.

The catalysed reaction is L-glutamine + H2O = L-glutamate + NH4(+). In Klebsiella pneumoniae (strain 342), this protein is Glutaminase.